Consider the following 383-residue polypeptide: Acetylornithine deacetylase (383 aa).

His80 is a binding site for Zn(2+). Asp82 is a catalytic residue. Zn(2+) is bound at residue Asp112. The active site involves Glu144. Residues Glu145, Glu169, and His355 each contribute to the Zn(2+) site.

This sequence belongs to the peptidase M20A family. ArgE subfamily. As to quaternary structure, homodimer. Zn(2+) is required as a cofactor. The cofactor is Co(2+). Requires glutathione as cofactor.

The protein resides in the cytoplasm. The enzyme catalyses N(2)-acetyl-L-ornithine + H2O = L-ornithine + acetate. Its pathway is amino-acid biosynthesis; L-arginine biosynthesis; L-ornithine from N(2)-acetyl-L-ornithine (linear): step 1/1. Its function is as follows. Catalyzes the hydrolysis of the amide bond of N(2)-acetylated L-amino acids. Cleaves the acetyl group from N-acetyl-L-ornithine to form L-ornithine, an intermediate in L-arginine biosynthesis pathway, and a branchpoint in the synthesis of polyamines. This is Acetylornithine deacetylase from Escherichia coli (strain SMS-3-5 / SECEC).